Reading from the N-terminus, the 246-residue chain is Large ribosomal subunit protein uL2 (246 aa).

The interval 197 to 226 (SPYAHPHGGGSHPKGGTPVPKTAPPGQKVG) is disordered.

The protein belongs to the universal ribosomal protein uL2 family. Part of the 50S ribosomal subunit. Forms a bridge to the 30S subunit in the 70S ribosome.

Its function is as follows. One of the primary rRNA binding proteins. Required for association of the 30S and 50S subunits to form the 70S ribosome, for tRNA binding and peptide bond formation. It has been suggested to have peptidyltransferase activity; this is somewhat controversial. Makes several contacts with the 16S rRNA in the 70S ribosome. The sequence is that of Large ribosomal subunit protein uL2 from Pyrobaculum islandicum (strain DSM 4184 / JCM 9189 / GEO3).